The sequence spans 903 residues: Dual 3',5'-cyclic-AMP and -GMP phosphodiesterase 11A (903 aa).

2 GAF domains span residues 175 to 324 and 356 to 512; these read DLTS…GIAI and DLEK…GLGI. Serine 378 serves as a coordination point for 3',5'-cyclic GMP. The PDEase domain maps to 542–866; sequence SKTEVDKFKA…VKWEELDKKR (325 aa). Histidine 618 acts as the Proton donor in catalysis. Residues histidine 622, histidine 658, aspartate 659, and aspartate 770 each contribute to the a divalent metal cation site. The tract at residues 863-903 is disordered; it reads DKKRQHDHGASVPASPCSAAEGSETGGVPCCSNNTPPTHVS. Residues 893 to 903 are compositionally biased toward polar residues; that stretch reads CSNNTPPTHVS.

This sequence belongs to the cyclic nucleotide phosphodiesterase family. The cofactor is a divalent metal cation.

It localises to the cytoplasm. It is found in the cytosol. It catalyses the reaction 3',5'-cyclic GMP + H2O = GMP + H(+). The catalysed reaction is 3',5'-cyclic AMP + H2O = AMP + H(+). Plays a role in signal transduction by regulating the intracellular concentration of cyclic nucleotides cAMP and cGMP. Catalyzes the hydrolysis of both cAMP and cGMP to 5'-AMP and 5'-GMP, respectively. The polypeptide is Dual 3',5'-cyclic-AMP and -GMP phosphodiesterase 11A (pde11a) (Takifugu rubripes (Japanese pufferfish)).